We begin with the raw amino-acid sequence, 646 residues long: Long-chain fatty acid transport protein 1 (646 aa).

Topologically, residues 1 to 13 (MRAPGAGAASVVS) are extracellular. A helical membrane pass occupies residues 14–34 (LALLWLLGLPWTWSAAAALGV). Topologically, residues 35 to 646 (YVGSGGWRFL…TRICSGAFAL (612 aa)) are cytoplasmic. Residues 191–475 (EVSGHLGKSL…YVSESATSKK (285 aa)) form a sufficient for oligomerization region. 246 to 257 (YIYTSGTTGLPK) is a binding site for AMP.

The protein belongs to the ATP-dependent AMP-binding enzyme family. As to quaternary structure, self-associates. May function as a homodimer. Interacts with EPRS1; mediates the translocation of SLC27A1 from the cytoplasm to the plasma membrane thereby increasing the uptake of long-chain fatty acids. Interacts with DGAT2 and this interaction is enhanced in the presence of ZFYVE1. In terms of tissue distribution, highest levels of expression are detected in muscle and adipose tissue small, intermediate levels in small intestine, and barely detectable in liver. Expressed in brain gray matter.

Its subcellular location is the cell membrane. The protein resides in the endomembrane system. The protein localises to the cytoplasm. It carries out the reaction a fatty acid(in) = a fatty acid(out). It catalyses the reaction (9Z)-octadecenoate(out) = (9Z)-octadecenoate(in). The enzyme catalyses hexadecanoate(out) = hexadecanoate(in). The catalysed reaction is (9Z,12Z)-octadecadienoate(out) = (9Z,12Z)-octadecadienoate(in). It carries out the reaction (5Z,8Z,11Z,14Z)-eicosatetraenoate(out) = (5Z,8Z,11Z,14Z)-eicosatetraenoate(in). It catalyses the reaction a long-chain fatty acid + ATP + CoA = a long-chain fatty acyl-CoA + AMP + diphosphate. The enzyme catalyses (5Z,8Z,11Z,14Z)-eicosatetraenoate + ATP + CoA = (5Z,8Z,11Z,14Z)-eicosatetraenoyl-CoA + AMP + diphosphate. The catalysed reaction is a very long-chain fatty acid + ATP + CoA = a very long-chain fatty acyl-CoA + AMP + diphosphate. It carries out the reaction tetracosanoate + ATP + CoA = tetracosanoyl-CoA + AMP + diphosphate. Its activity is regulated as follows. Inhibited by Triacsin C. Functionally, mediates the import of long-chain fatty acids (LCFA) into the cell by facilitating their transport at the plasma membrane. Also functions as an acyl-CoA ligase catalyzing the ATP-dependent formation of fatty acyl-CoA using LCFA and very-long-chain fatty acids (VLCFA) as substrates, which prevents fatty acid efflux from cells and might drive more fatty acid uptake. May act directly as a bona fide transporter, or alternatively, in a cytoplasmic or membrane-associated multimeric protein complex to trap and draw fatty acids towards accumulation. Plays a pivotal role in regulating available LCFA substrates from exogenous sources in tissues undergoing high levels of beta-oxidation or triglyceride synthesis. May be involved in regulation of cholesterol metabolism. Probably involved in fatty acid transport across the blood barrier. This chain is Long-chain fatty acid transport protein 1, found in Homo sapiens (Human).